The chain runs to 383 residues: Probable endopolygalacturonase C (383 aa).

Residues 1 to 16 (MVRQLILISSLLAAVA) form the signal peptide. A propeptide spanning residues 17–40 (VRAPADPAHPMVTEAPDVNLVEKR) is cleaved from the precursor. A disulfide bond links cysteine 44 and cysteine 62. 2 PbH1 repeats span residues 175-206 (STDL…DIGE) and 207-228 (STYI…AINS). Aspartate 221 (proton donor) is an active-site residue. A disulfide bridge links cysteine 223 with cysteine 239. Histidine 243 is a catalytic residue. 2 PbH1 repeats span residues 253–279 (RDDN…RIKT) and 287–309 (VSEV…VIEQ). Asparagine 260 carries an N-linked (GlcNAc...) asparagine glycan. Intrachain disulfides connect cysteine 348–cysteine 353 and cysteine 372–cysteine 381.

The protein belongs to the glycosyl hydrolase 28 family.

It localises to the secreted. The catalysed reaction is (1,4-alpha-D-galacturonosyl)n+m + H2O = (1,4-alpha-D-galacturonosyl)n + (1,4-alpha-D-galacturonosyl)m.. Its function is as follows. Involved in maceration and soft-rotting of plant tissue. Hydrolyzes the 1,4-alpha glycosidic bonds of de-esterified pectate in the smooth region of the plant cell wall. The polypeptide is Probable endopolygalacturonase C (pgaC) (Aspergillus niger).